We begin with the raw amino-acid sequence, 89 residues long: Small ribosomal subunit protein uS15 (89 aa).

Belongs to the universal ribosomal protein uS15 family. Part of the 30S ribosomal subunit. Forms a bridge to the 50S subunit in the 70S ribosome, contacting the 23S rRNA.

In terms of biological role, one of the primary rRNA binding proteins, it binds directly to 16S rRNA where it helps nucleate assembly of the platform of the 30S subunit by binding and bridging several RNA helices of the 16S rRNA. Forms an intersubunit bridge (bridge B4) with the 23S rRNA of the 50S subunit in the ribosome. In Haemophilus influenzae (strain 86-028NP), this protein is Small ribosomal subunit protein uS15.